We begin with the raw amino-acid sequence, 624 residues long: Glutaminase 2 (624 aa).

The segment at 1-20 (MDTQPIRLPSVAGATRSAGY) is disordered. Residues 43–325 (GELADYIPEL…LSARFDLHML (283 aa)) form a glutaminase region. 7 residues coordinate substrate: serine 85, asparagine 134, glutamate 178, asparagine 185, tyrosine 209, tyrosine 261, and valine 279. The STAS domain occupies 355–466 (QQILDERHSD…ALLDDAIEWA (112 aa)). 491–608 (LLAELDTDEI…IMRNLAAILA (118 aa)) lines the a nucleoside 3',5'-cyclic phosphate pocket.

It belongs to the glutaminase family. In terms of assembly, homotetramer.

The enzyme catalyses L-glutamine + H2O = L-glutamate + NH4(+). The polypeptide is Glutaminase 2 (glsA2) (Bradyrhizobium diazoefficiens (strain JCM 10833 / BCRC 13528 / IAM 13628 / NBRC 14792 / USDA 110)).